The following is a 305-amino-acid chain: Oxidoreductase swnR (305 aa).

It belongs to the NmrA-type oxidoreductase family. Isoflavone reductase subfamily.

The catalysed reaction is L-pipecolate + O2 = L-1-piperideine-6-carboxylate + H2O2 + H(+). Its pathway is mycotoxin biosynthesis. Its function is as follows. Oxidoreductase; part of the gene cluster that mediates the biosynthesis of swainsonine (SW), a cytotoxic fungal alkaloid and a potential cancer therapy drug. Swainsonine production occurs via a multibranched pathway and is dispensable for fungal colonization of plants and infection of insect hosts. The first step of swainsonine biosynthesis is the production of the precursor pipecolic acid (PA) via conversion of L-lysine (Lys) to 1-piperideine-6-carboxylate (P6C) by the aminotransferase swnA, the latter being further reduced to PA by the reductase swnR. PA can be converted from lysine by both the SW biosynthetic cluster and the unclustered genes such as lysine cyclodeaminase. The PKS-NRPS hybrid synthetase swnK uptakes and condensates PA and malonyl-CoA with and without skipping of the ketoreductase (KR) domain in order to produce 3 intermediates, 1-oxoindolizidine, (1S)-1-hydroxyindolizin, and (1R)-1-hydroxyindolizine; with the transisomer (1S)-1-hydroxyindolizin being predominant. The terminal thioester reductase (TE) domain of swnK is involved in reduction of the thioester bond to release the intermediate aldehydes. The oxidoreductase swnN could contribute to the reduction of 1-oxoindolizidine to (1S)-1-hydroxyindolizin and (1R)-1-hydroxyindolizine, contributing to the major route of SW production. The dioxygenase swnH2 would be responsible for the oxidization of (1R)-1-hydroxyindolizine into (1R,2S)-1,2-dihydroxyindolizine and of (1S)-1-hydroxyindolizin to yield both (1R,2S)-1,2-dihydroxyindolizine and (1S,2S)-1,2-dihydroxyindolizine. The dioxygenase swnH1 then performs the conversion of the 1,2-dihydroxyindolizine epimers to SW. The polypeptide is Oxidoreductase swnR (Metarhizium robertsii (strain ARSEF 23 / ATCC MYA-3075) (Metarhizium anisopliae (strain ARSEF 23))).